The chain runs to 317 residues: Malate dehydrogenase (317 aa).

Residues 13-18 (GAGNIG) and Asp-38 contribute to the NAD(+) site. Arg-87 and Arg-93 together coordinate substrate. NAD(+)-binding positions include Asn-100 and 123 to 125 (VTN). The substrate site is built by Asn-125 and Arg-156. His-180 functions as the Proton acceptor in the catalytic mechanism.

This sequence belongs to the LDH/MDH superfamily. MDH type 3 family.

The enzyme catalyses (S)-malate + NAD(+) = oxaloacetate + NADH + H(+). In terms of biological role, catalyzes the reversible oxidation of malate to oxaloacetate. This is Malate dehydrogenase from Anaplasma marginale (strain Florida).